A 467-amino-acid chain; its full sequence is Asparagine--tRNA ligase (467 aa).

The protein belongs to the class-II aminoacyl-tRNA synthetase family. Homodimer.

The protein localises to the cytoplasm. The catalysed reaction is tRNA(Asn) + L-asparagine + ATP = L-asparaginyl-tRNA(Asn) + AMP + diphosphate + H(+). This is Asparagine--tRNA ligase from Legionella pneumophila (strain Lens).